The following is a 311-amino-acid chain: GTP cyclohydrolase MptA (311 aa).

It belongs to the GTP cyclohydrolase IV family. In terms of assembly, homodimer. Requires Fe(2+) as cofactor.

The catalysed reaction is GTP + H2O = 7,8-dihydroneopterin 2',3'-cyclic phosphate + formate + diphosphate + H(+). It functions in the pathway cofactor biosynthesis; 5,6,7,8-tetrahydromethanopterin biosynthesis. Its function is as follows. Converts GTP to 7,8-dihydro-D-neopterin 2',3'-cyclic phosphate, the first intermediate in the biosynthesis of coenzyme methanopterin. This Methanocorpusculum labreanum (strain ATCC 43576 / DSM 4855 / Z) protein is GTP cyclohydrolase MptA.